The following is a 278-amino-acid chain: Sulfur carrier protein FdhD (278 aa).

The active-site Cysteine persulfide intermediate is the C121. 260-265 (FCKPGR) contributes to the Mo-bis(molybdopterin guanine dinucleotide) binding site.

Belongs to the FdhD family.

It is found in the cytoplasm. Its function is as follows. Required for formate dehydrogenase (FDH) activity. Acts as a sulfur carrier protein that transfers sulfur from IscS to the molybdenum cofactor prior to its insertion into FDH. This is Sulfur carrier protein FdhD from Escherichia coli O127:H6 (strain E2348/69 / EPEC).